The primary structure comprises 261 residues: Triosephosphate isomerase (261 aa).

2 residues coordinate D-glyceraldehyde 3-phosphate: asparagine 11 and lysine 13. Histidine 102 acts as the Electrophile in catalysis. The active-site Proton acceptor is the glutamate 174. The D-glyceraldehyde 3-phosphate site is built by glycine 180, leucine 239, and glycine 241.

Belongs to the triosephosphate isomerase family. Homodimer.

The catalysed reaction is D-glyceraldehyde 3-phosphate = dihydroxyacetone phosphate. It functions in the pathway carbohydrate biosynthesis; gluconeogenesis. It participates in carbohydrate degradation; glycolysis; D-glyceraldehyde 3-phosphate from glycerone phosphate: step 1/1. Catalyzes the interconversion of glyceraldehyde 3-phosphate and dihydroxyacetone phosphate in the glycolytic and gluconeogenic pathways. The chain is Triosephosphate isomerase from Entamoeba histolytica (strain ATCC 30459 / HM-1:IMSS / ABRM).